A 359-amino-acid polypeptide reads, in one-letter code: Glyceraldehyde-3-phosphate dehydrogenase, glycosomal (359 aa).

NAD(+) contacts are provided by residues 12-13, Asp-38, Gln-91, and Ser-134; that span reads RI. Residues 165–167, Thr-197, 226–227, and Arg-249 each bind D-glyceraldehyde 3-phosphate; these read SCT and TG. Residue Cys-166 is the Nucleophile of the active site. Asn-335 lines the NAD(+) pocket. A Microbody targeting signal motif is present at residues 357 to 359; that stretch reads ARL.

This sequence belongs to the glyceraldehyde-3-phosphate dehydrogenase family. As to quaternary structure, homotetramer.

It localises to the glycosome. It catalyses the reaction D-glyceraldehyde 3-phosphate + phosphate + NAD(+) = (2R)-3-phospho-glyceroyl phosphate + NADH + H(+). Its pathway is carbohydrate degradation; glycolysis; pyruvate from D-glyceraldehyde 3-phosphate: step 1/5. The protein is Glyceraldehyde-3-phosphate dehydrogenase, glycosomal of Trypanosoma cruzi.